Consider the following 346-residue polypeptide: Tetraacyldisaccharide 4'-kinase (346 aa).

53–60 (TCGGTGKT) lines the ATP pocket.

The protein belongs to the LpxK family.

The enzyme catalyses a lipid A disaccharide + ATP = a lipid IVA + ADP + H(+). Its pathway is glycolipid biosynthesis; lipid IV(A) biosynthesis; lipid IV(A) from (3R)-3-hydroxytetradecanoyl-[acyl-carrier-protein] and UDP-N-acetyl-alpha-D-glucosamine: step 6/6. In terms of biological role, transfers the gamma-phosphate of ATP to the 4'-position of a tetraacyldisaccharide 1-phosphate intermediate (termed DS-1-P) to form tetraacyldisaccharide 1,4'-bis-phosphate (lipid IVA). The sequence is that of Tetraacyldisaccharide 4'-kinase from Bartonella tribocorum (strain CIP 105476 / IBS 506).